A 125-amino-acid chain; its full sequence is RxLR effector protein Avh6 (125 aa).

A signal peptide spans 1 to 25 (MRLSSTTFVVLAAVLLASGTAVSKA). The RxLR-dEER motif lies at 48–70 (RFLRSHHTEDGEAKLSNYDNEER).

Belongs to the RxLR effector family.

It localises to the secreted. The protein localises to the host cell. In terms of biological role, effector that suppresses plant defense responses during the early stages of pathogen infection. Suppresses cell death induced by effectors and PAMPs in plant hosts. Triggers a hypersensitive response (HR) in the presence of Rps1d. Suppresses BAX-induced cell death and enhan,ced P.capsici infection in Nicotiana benthamiana. Also suppresses effector-triggered immunity induction by associating with Avr1b and Rps1b, suggesting a role in suppressing plant immunity. The chain is RxLR effector protein Avh6 from Phytophthora sojae (strain P6497) (Soybean stem and root rot agent).